The primary structure comprises 61 residues: LECHNQQSSQAPTTKTCSGETNCYKKWWSDHRGTIIERGCGCPKVKPGVKLNCCTTDRCNN.

Cystine bridges form between cysteine 3–cysteine 23, cysteine 17–cysteine 40, cysteine 42–cysteine 53, and cysteine 54–cysteine 59.

It belongs to the three-finger toxin family. Short-chain subfamily. Type I alpha-neurotoxin sub-subfamily. As to expression, expressed by the venom gland.

It is found in the secreted. Functionally, binds to muscle nicotinic acetylcholine receptor (nAChR) and inhibit acetylcholine from binding to the receptor, thereby impairing neuromuscular transmission. The sequence is that of Short neurotoxin 1 from Naja samarensis (Peters' cobra).